Consider the following 109-residue polypeptide: T cell receptor alpha variable 26-2 (109 aa).

Positions methionine 1–alanine 19 are cleaved as a signal peptide. The Ig-like domain maps to lysine 20–aspartate 109. Residues cysteine 39 and cysteine 105 are joined by a disulfide bond. An N-linked (GlcNAc...) asparagine glycan is attached at asparagine 40.

In terms of assembly, alpha-beta TR is a heterodimer composed of an alpha and beta chain; disulfide-linked. The alpha-beta TR is associated with the transmembrane signaling CD3 coreceptor proteins to form the TR-CD3 (TcR or TCR). The assembly of alpha-beta TR heterodimers with CD3 occurs in the endoplasmic reticulum where a single alpha-beta TR heterodimer associates with one CD3D-CD3E heterodimer, one CD3G-CD3E heterodimer and one CD247 homodimer forming a stable octameric structure. CD3D-CD3E and CD3G-CD3E heterodimers preferentially associate with TR alpha and TR beta chains, respectively. The association of the CD247 homodimer is the last step of TcR assembly in the endoplasmic reticulum and is required for transport to the cell surface.

It is found in the cell membrane. In terms of biological role, v region of the variable domain of T cell receptor (TR) alpha chain that participates in the antigen recognition. Alpha-beta T cell receptors are antigen specific receptors which are essential to the immune response and are present on the cell surface of T lymphocytes. Recognize peptide-major histocompatibility (MH) (pMH) complexes that are displayed by antigen presenting cells (APC), a prerequisite for efficient T cell adaptive immunity against pathogens. Binding of alpha-beta TR to pMH complex initiates TR-CD3 clustering on the cell surface and intracellular activation of LCK that phosphorylates the ITAM motifs of CD3G, CD3D, CD3E and CD247 enabling the recruitment of ZAP70. In turn ZAP70 phosphorylates LAT, which recruits numerous signaling molecules to form the LAT signalosome. The LAT signalosome propagates signal branching to three major signaling pathways, the calcium, the mitogen-activated protein kinase (MAPK) kinase and the nuclear factor NF-kappa-B (NF-kB) pathways, leading to the mobilization of transcription factors that are critical for gene expression and essential for T cell growth and differentiation. The T cell repertoire is generated in the thymus, by V-(D)-J rearrangement. This repertoire is then shaped by intrathymic selection events to generate a peripheral T cell pool of self-MH restricted, non-autoaggressive T cells. Post-thymic interaction of alpha-beta TR with the pMH complexes shapes TR structural and functional avidity. The polypeptide is T cell receptor alpha variable 26-2 (Homo sapiens (Human)).